The chain runs to 368 residues: WD repeat-containing protein RUP2 (368 aa).

WD repeat units follow at residues 38 to 77 (SASD…RNNA), 97 to 138 (CTPA…PVFE), 141 to 184 (EHGG…EESV), 192 to 232 (ICRS…DPAL), 236 to 276 (GHTK…RTYE), 279 to 318 (VNNR…PVWV), and 330 to 368 (SDKR…KRKP).

In terms of assembly, interacts with UVR8.

It is found in the nucleus. The protein resides in the cytoplasm. The protein localises to the cytosol. Functionally, functions in association with RUP1 as repressor of UV-B-induced photomorphogenesis mediated by UVR8 and HY5. Plays a crucial negative feedback regulatory role downstream of UVR8-COP1 to inhibit UVR8 function, balance UV-B-specific responses and ensure normal plant growth. Is involved in the regulation of photoperiodic flowering and vegetative development. May act as negative regulator of photoperiodic flowering by suppressing flowering through the action of CONSTANS (CO) and FLOWERING LOCUS T (FT). In Arabidopsis thaliana (Mouse-ear cress), this protein is WD repeat-containing protein RUP2 (RUP2).